We begin with the raw amino-acid sequence, 617 residues long: NADPH-dependent diflavin oxidoreductase 1 (617 aa).

The 145-residue stretch at 3-147 folds into the Flavodoxin-like domain; the sequence is PMILYASETG…AFLPWLQQTL (145 aa). FMN is bound by residues 9–14, 56–59, 94–103, and Glu-129; these read SETGNA, STHG, and LGDSSYERFC. An FAD-binding FR-type domain is found at 226–465; the sequence is DDWVWATLKK…HIASPTLFLP (240 aa). Residues 404–407 and 438–441 each bind FAD; these read RQFS and GLCS. NADP(+)-binding positions include Thr-479, 534–535, and 540–544; these read SR and RIYVQ. FAD is bound at residue Trp-617.

Belongs to the NADPH-dependent diflavin oxidoreductase NDOR1 family. The protein in the N-terminal section; belongs to the flavodoxin family. This sequence in the C-terminal section; belongs to the flavoprotein pyridine nucleotide cytochrome reductase family. Interacts with DRE2; as part of the cytosolic iron-sulfur (Fe-S) protein assembly (CIA) machinery. FAD serves as cofactor. It depends on FMN as a cofactor.

The protein localises to the cytoplasm. It localises to the mitochondrion. It catalyses the reaction 2 oxidized [2Fe-2S]-[protein] + NADPH = 2 reduced [2Fe-2S]-[protein] + NADP(+) + H(+). Its function is as follows. NADPH-dependent reductase which is a central component of the cytosolic iron-sulfur (Fe-S) protein assembly (CIA) machinery. Transfers electrons from NADPH via its FAD and FMN prosthetic groups to the [2Fe-2S] cluster of DRE2, another key component of the CIA machinery. In turn, this reduced cluster provides electrons for assembly of cytosolic iron-sulfur cluster proteins. Positively controls H(2)O(2)-induced cell death. This is NADPH-dependent diflavin oxidoreductase 1 from Cryptococcus neoformans var. neoformans serotype D (strain B-3501A) (Filobasidiella neoformans).